Here is an 873-residue protein sequence, read N- to C-terminus: Inner centromere protein A (873 aa).

Disordered regions lie at residues 50-124, 237-270, 282-452, 484-535, 566-649, 683-736, and 781-800; these read AEPE…KRMT, PANEQQLNLSNQSATPTGSKSDRRSVRRSLVVRK, FSLA…PPPH, KRNT…KVRR, QIDE…LAEQ, LERA…EQAA, and DLNSDDSTDDESQPRKPIPA. Over residues 60–69 the composition is skewed to basic residues; the sequence is SQKRRRKKRT. Residues 87 to 105 show a composition bias toward low complexity; it reads RQSNASWSSSVRRLSVRNQ. The segment covering 239-254 has biased composition (polar residues); that stretch reads NEQQLNLSNQSATPTG. The span at 261 to 270 shows a compositional bias: basic residues; sequence SVRRSLVVRK. Residues 286 to 297 show a composition bias toward basic and acidic residues; that stretch reads SKRESMTREAVR. The segment covering 314–325 has biased composition (low complexity); it reads SSTSSQRSYQSS. Residues 437–452 show a composition bias toward pro residues; the sequence is PSPPCPPSKIVRPPPH. Basic and acidic residues-rich tracts occupy residues 491-535, 566-584, 591-649, and 683-733; these read TDPK…KVRR, QIDEKSEKVREDRMAEEKA, KKQE…LAEQ, and LERA…KAKE. The interval 494 to 707 is SAH; sequence KTEEKERQRL…EERKKREQQE (214 aa). The segment at 782–856 is IN box; that stretch reads LNSDDSTDDE…RTSSAVWHSP (75 aa). Phosphoserine occurs at positions 849 and 850.

It belongs to the INCENP family. In terms of assembly, component of the CPC composed of survivin/birc5, incenp, cdca8/borealin and/or cdca9/dasra-A, and aurkb/aurora-B. Interacts (via C-terminus) with aurkb (via N-terminus and kinase domain). Interacts (via N-terminus) with birc5.1, birc5.2, cdca8 and cdca9. Interacts with mtus1.

The protein localises to the nucleus. The protein resides in the chromosome. It is found in the centromere. Its subcellular location is the cytoplasm. It localises to the cytoskeleton. The protein localises to the spindle. The protein resides in the midbody. It is found in the kinetochore. Component of the chromosomal passenger complex (CPC), a complex that acts as a key regulator of mitosis. The CPC complex has essential functions at the centromere in ensuring correct chromosome alignment and segregation and is required for chromatin-induced microtubule stabilization and spindle assembly. Acts as a scaffold regulating CPC localization and activity. The C-terminus associates with aurkb/aurora-B, the N-terminus associated with cdca8/borealin and/or cdca9/dasra-A tethers the CPC to the inner centromere, and the microtubule binding activity within the central SAH domain directs aurkb/aurora-B toward substrates near microtubules. Activates aurkb. The protein is Inner centromere protein A (incenp-a) of Xenopus laevis (African clawed frog).